Consider the following 107-residue polypeptide: Metallothionein-1 (107 aa).

This sequence belongs to the metallothionein superfamily. Type 7 family.

Its function is as follows. The metallothioneins are involved in the cellular sequestration of toxic metal ions. Binds 12 cadmium ions per molecule. The protein is Metallothionein-1 of Tetrahymena thermophila.